A 390-amino-acid chain; its full sequence is Leu/Ile/Val-binding protein homolog 6 (390 aa).

A signal peptide spans 1-21 (MKKIALTALAVFSLAASAAYA).

This sequence belongs to the leucine-binding protein family.

Its function is as follows. Component of an amino-acid transport system. This Brucella melitensis biotype 1 (strain ATCC 23456 / CCUG 17765 / NCTC 10094 / 16M) protein is Leu/Ile/Val-binding protein homolog 6.